The chain runs to 110 residues: Waprin-Thr1 (110 aa).

The N-terminal stretch at 1–20 (MYKKGTILVLAYLLIATAVC) is a signal peptide. Residues 22–68 (LSYKEGHCPLRNSVSKCIPRCVSDYQCSFNEKCCPNKCGSESCVQAS) form the WAP domain. Intrachain disulfides connect cysteine 29–cysteine 55, cysteine 38–cysteine 59, cysteine 42–cysteine 54, and cysteine 48–cysteine 64.

Belongs to the venom waprin family. Cys-rich waprin subfamily. As to expression, expressed by the venom gland.

It is found in the secreted. Antimicrobial peptides with activity against Gram-positive and Gram-negative bacteria as well as fungi. Recognizes carbohydrates in the microbial cell walls, and induces structural damage to them. Also inhibits microbial serine proteases subtilisin A and proteinase K, as well as human and porcine elastases. Carbohydrates that are recognized are LPS, mannan, peptidoglycan, and N-acetl-D-glucosamine. In Apis mellifera (Honeybee), this protein is Waprin-Thr1.